The sequence spans 216 residues: Peptide deformylase 1 (216 aa).

Residues Cys135 and His177 each contribute to the Fe cation site. The active site involves Glu178. Residue His181 coordinates Fe cation.

Belongs to the polypeptide deformylase family. It depends on Fe(2+) as a cofactor.

It catalyses the reaction N-terminal N-formyl-L-methionyl-[peptide] + H2O = N-terminal L-methionyl-[peptide] + formate. Removes the formyl group from the N-terminal Met of newly synthesized proteins. Requires at least a dipeptide for an efficient rate of reaction. N-terminal L-methionine is a prerequisite for activity but the enzyme has broad specificity at other positions. This Streptomyces avermitilis (strain ATCC 31267 / DSM 46492 / JCM 5070 / NBRC 14893 / NCIMB 12804 / NRRL 8165 / MA-4680) protein is Peptide deformylase 1.